Consider the following 80-residue polypeptide: Small ribosomal subunit protein bS18 (80 aa).

Belongs to the bacterial ribosomal protein bS18 family. In terms of assembly, part of the 30S ribosomal subunit. Forms a tight heterodimer with protein bS6.

In terms of biological role, binds as a heterodimer with protein bS6 to the central domain of the 16S rRNA, where it helps stabilize the platform of the 30S subunit. This chain is Small ribosomal subunit protein bS18, found in Clostridium perfringens (strain ATCC 13124 / DSM 756 / JCM 1290 / NCIMB 6125 / NCTC 8237 / Type A).